The primary structure comprises 198 residues: Recombination protein RecR (198 aa).

The segment at 57-72 adopts a C4-type zinc-finger fold; it reads CSVCGHITENDPCYIC. In terms of domain architecture, Toprim spans 80 to 175; it reads SVICVVEDDK…KVTRLAQGLS (96 aa).

This sequence belongs to the RecR family.

May play a role in DNA repair. It seems to be involved in an RecBC-independent recombinational process of DNA repair. It may act with RecF and RecO. The polypeptide is Recombination protein RecR (Staphylococcus aureus (strain MSSA476)).